A 64-amino-acid chain; its full sequence is Large ribosomal subunit protein bL35 (64 aa).

It belongs to the bacterial ribosomal protein bL35 family.

This chain is Large ribosomal subunit protein bL35, found in Levilactobacillus brevis (strain ATCC 367 / BCRC 12310 / CIP 105137 / JCM 1170 / LMG 11437 / NCIMB 947 / NCTC 947) (Lactobacillus brevis).